The sequence spans 122 residues: MSKRSEKLAETIHETISSILSRGLNDPRIGFVTLTAVDVVEDLSIARIYFTAIGDRDARKNSEAGLNSAKGYLRRELGKVLTIRHIPELIFKYDESQEYGNRIDSILREIATEHDRDDSEHS.

It belongs to the RbfA family. Monomer. Binds 30S ribosomal subunits, but not 50S ribosomal subunits or 70S ribosomes.

It is found in the cytoplasm. In terms of biological role, one of several proteins that assist in the late maturation steps of the functional core of the 30S ribosomal subunit. Associates with free 30S ribosomal subunits (but not with 30S subunits that are part of 70S ribosomes or polysomes). Required for efficient processing of 16S rRNA. May interact with the 5'-terminal helix region of 16S rRNA. The chain is Ribosome-binding factor A from Pelobacter propionicus (strain DSM 2379 / NBRC 103807 / OttBd1).